Here is a 126-residue protein sequence, read N- to C-terminus: Small ribosomal subunit protein bS6 (126 aa).

Positions 101–126 are disordered; it reads VMMKAKEERTAKREDAAPRAEEAAAE. Positions 104–126 are enriched in basic and acidic residues; that stretch reads KAKEERTAKREDAAPRAEEAAAE.

The protein belongs to the bacterial ribosomal protein bS6 family.

Functionally, binds together with bS18 to 16S ribosomal RNA. This Aliivibrio salmonicida (strain LFI1238) (Vibrio salmonicida (strain LFI1238)) protein is Small ribosomal subunit protein bS6.